The chain runs to 117 residues: Ribonuclease P protein component (117 aa).

Belongs to the RnpA family. As to quaternary structure, consists of a catalytic RNA component (M1 or rnpB) and a protein subunit.

It carries out the reaction Endonucleolytic cleavage of RNA, removing 5'-extranucleotides from tRNA precursor.. Its function is as follows. RNaseP catalyzes the removal of the 5'-leader sequence from pre-tRNA to produce the mature 5'-terminus. It can also cleave other RNA substrates such as 4.5S RNA. The protein component plays an auxiliary but essential role in vivo by binding to the 5'-leader sequence and broadening the substrate specificity of the ribozyme. The polypeptide is Ribonuclease P protein component (Thermotoga petrophila (strain ATCC BAA-488 / DSM 13995 / JCM 10881 / RKU-1)).